Here is a 169-residue protein sequence, read N- to C-terminus: MSDDRLGLGRERRFLVLLGIICLALIGGALYMQVVLGEAPCPLCILQRYALLLIALFAFIGAAMSSRRGVTVMETLVVICALAGAGVAGHHVYTQFYPSVSCGIDVLQPIVDSLPLAKIFPLGFQVDGFCSTPYPPILGLSLAQWALVAFVLTVILVPLGVVRNRKKTY.

At Met1 to Phe14 the chain is on the cytoplasmic side. The helical transmembrane segment at Leu15–Tyr31 threads the bilayer. At Met32–Tyr49 the chain is on the periplasmic side. Cys41 and Cys44 are oxidised to a cystine. Residues Ala50 to Met64 form a helical membrane-spanning segment. The Cytoplasmic segment spans residues Ser65–Thr71. A helical transmembrane segment spans residues Val72–Gly89. Residues His90–Gln144 are Periplasmic-facing. A disulfide bridge connects residues Cys102 and Cys130. The chain crosses the membrane as a helical span at residues Trp145 to Arg163. Residues Asn164–Tyr169 are Cytoplasmic-facing.

This sequence belongs to the DsbB family.

The protein resides in the cell inner membrane. Required for disulfide bond formation in some periplasmic proteins. Acts by oxidizing the DsbA protein. The protein is Disulfide bond formation protein B 1 of Pseudomonas fluorescens (strain ATCC BAA-477 / NRRL B-23932 / Pf-5).